The following is a 386-amino-acid chain: Probable pectin lyase F (386 aa).

Positions 1 to 16 are cleaved as a signal peptide; the sequence is MKTAVLSLLLALQAYA. A disulfide bridge connects residues Cys-77 and Cys-101. An N-linked (GlcNAc...) asparagine glycan is attached at Asn-124. The active site involves Arg-251. Cys-326 and Cys-334 form a disulfide bridge.

Belongs to the polysaccharide lyase 1 family.

Its subcellular location is the secreted. It catalyses the reaction Eliminative cleavage of (1-&gt;4)-alpha-D-galacturonan methyl ester to give oligosaccharides with 4-deoxy-6-O-methyl-alpha-D-galact-4-enuronosyl groups at their non-reducing ends.. Its function is as follows. Pectinolytic enzymes consist of four classes of enzymes: pectin lyase, polygalacturonase, pectin methylesterase and rhamnogalacturonase. Among pectinolytic enzymes, pectin lyase is the most important in depolymerization of pectin, since it cleaves internal glycosidic bonds of highly methylated pectins. In Neosartorya fischeri (strain ATCC 1020 / DSM 3700 / CBS 544.65 / FGSC A1164 / JCM 1740 / NRRL 181 / WB 181) (Aspergillus fischerianus), this protein is Probable pectin lyase F (pelF).